Reading from the N-terminus, the 208-residue chain is FMN-dependent NADH:quinone oxidoreductase 4 (208 aa).

This sequence belongs to the azoreductase type 1 family. As to quaternary structure, homodimer. Requires FMN as cofactor.

It carries out the reaction 2 a quinone + NADH + H(+) = 2 a 1,4-benzosemiquinone + NAD(+). The catalysed reaction is N,N-dimethyl-1,4-phenylenediamine + anthranilate + 2 NAD(+) = 2-(4-dimethylaminophenyl)diazenylbenzoate + 2 NADH + 2 H(+). Its function is as follows. Quinone reductase that provides resistance to thiol-specific stress caused by electrophilic quinones. Functionally, also exhibits azoreductase activity. Catalyzes the reductive cleavage of the azo bond in aromatic azo compounds to the corresponding amines. In Bacillus cereus (strain ZK / E33L), this protein is FMN-dependent NADH:quinone oxidoreductase 4.